A 250-amino-acid chain; its full sequence is uncharacterized protein (250 aa).

A helical transmembrane segment spans residues 2-22 (ILRIIIFVIIILVVSLLLIYF).

It localises to the membrane. This is an uncharacterized protein from Acanthamoeba polyphaga (Amoeba).